A 289-amino-acid polypeptide reads, in one-letter code: Oxaloacetate decarboxylase (289 aa).

Ser47 is a substrate binding site. Mg(2+) is bound at residue Asp85. Positions 156 and 232 each coordinate substrate.

It belongs to the isocitrate lyase/PEP mutase superfamily. Oxaloacetate decarboxylase family. Homotetramer; dimer of dimers. Mg(2+) is required as a cofactor.

It catalyses the reaction oxaloacetate + H(+) = pyruvate + CO2. Its function is as follows. Catalyzes the decarboxylation of oxaloacetate into pyruvate. Seems to play a role in maintaining cellular concentrations of bicarbonate and pyruvate. The polypeptide is Oxaloacetate decarboxylase (Rhodopseudomonas palustris (strain HaA2)).